Here is a 196-residue protein sequence, read N- to C-terminus: Alpha-crystallin A chain (196 aa).

Residue M1 is modified to N-acetylmethionine. Residues M1–E63 are required for complex formation with BFSP1 and BFSP2. Q6 is modified (deamidated glutamine; partial). Residue S45 is modified to Phosphoserine. Q50 is subject to Deamidated glutamine; partial. A sHSP domain is found at H76–S185. K93 and K122 each carry N6-acetyllysine. A Zn(2+)-binding site is contributed by H123. A Deamidated asparagine; partial modification is found at N124. Zn(2+) is bound by residues E125 and H130. S145 bears the Phosphoserine mark. N146 carries the deamidated asparagine; partial modification. The tract at residues K168–S196 is disordered. Position 170 is a deamidated glutamine; partial (Q170). Positions G176–P190 are enriched in basic and acidic residues. Zn(2+) is bound at residue H177. O-linked (GlcNAc) serine glycosylation is present at S185.

It belongs to the small heat shock protein (HSP20) family. Heteropolymer composed of three CRYAA and one CRYAB subunits. Inter-subunit bridging via zinc ions enhances stability, which is crucial as there is no protein turn over in the lens. Can also form homodimers and homotetramers (dimers of dimers) which serve as the building blocks of homooligomers. Within homooligomers, the zinc-binding motif is created from residues of 3 different molecules. His-123 and Glu-125 from one molecule are ligands of the zinc ion, and His-130 and His-177 residues from additional molecules complete the site with tetrahedral coordination geometry. Part of a complex required for lens intermediate filament formation composed of BFSP1, BFSP2 and CRYAA. Acetylation at Lys-93 may increase chaperone activity. In terms of processing, undergoes age-dependent proteolytical cleavage at the C-terminus. Cleavage by m-calpain produces specifically alpha-crystallin A(1-162), cleavage by Capn3/Lp82 produces specifically alpha-crystallin A(1-168) which is the major truncated form during normal maturation and induced cataract formation. Highly expressed in eye lens. Also expressed in non-lenticular tissues such as brain, spleen, liver, lung, skin, small intestine and a several epithelial and fibroblast cell lines with highest levels in spleen.

The protein resides in the cytoplasm. The protein localises to the nucleus. Its function is as follows. Contributes to the transparency and refractive index of the lens. Acts as a chaperone, preventing aggregation of various proteins under a wide range of stress conditions. Required for the correct formation of lens intermediate filaments as part of a complex composed of BFSP1, BFSP2 and CRYAA. Functionally, inhibits bacterial growth in the lens. The sequence is that of Alpha-crystallin A chain (Cryaa) from Rattus norvegicus (Rat).